A 259-amino-acid chain; its full sequence is 1-(5-phosphoribosyl)-5-[(5-phosphoribosylamino)methylideneamino] imidazole-4-carboxamide isomerase (259 aa).

The active-site Proton acceptor is the D8. D129 serves as the catalytic Proton donor.

Belongs to the HisA/HisF family.

Its subcellular location is the cytoplasm. It catalyses the reaction 1-(5-phospho-beta-D-ribosyl)-5-[(5-phospho-beta-D-ribosylamino)methylideneamino]imidazole-4-carboxamide = 5-[(5-phospho-1-deoxy-D-ribulos-1-ylimino)methylamino]-1-(5-phospho-beta-D-ribosyl)imidazole-4-carboxamide. It functions in the pathway amino-acid biosynthesis; L-histidine biosynthesis; L-histidine from 5-phospho-alpha-D-ribose 1-diphosphate: step 4/9. The sequence is that of 1-(5-phosphoribosyl)-5-[(5-phosphoribosylamino)methylideneamino] imidazole-4-carboxamide isomerase from Pelotomaculum thermopropionicum (strain DSM 13744 / JCM 10971 / SI).